A 212-amino-acid polypeptide reads, in one-letter code: Uridine kinase (212 aa).

13–20 contacts ATP; it reads GASASGKS.

It belongs to the uridine kinase family.

The protein localises to the cytoplasm. The enzyme catalyses uridine + ATP = UMP + ADP + H(+). The catalysed reaction is cytidine + ATP = CMP + ADP + H(+). Its pathway is pyrimidine metabolism; CTP biosynthesis via salvage pathway; CTP from cytidine: step 1/3. The protein operates within pyrimidine metabolism; UMP biosynthesis via salvage pathway; UMP from uridine: step 1/1. The chain is Uridine kinase from Shewanella oneidensis (strain ATCC 700550 / JCM 31522 / CIP 106686 / LMG 19005 / NCIMB 14063 / MR-1).